Reading from the N-terminus, the 489-residue chain is Virion host shutoff protein (489 aa).

Disordered regions lie at residues 110–135 (EEAS…AFSN), 142–161 (SLAS…PSAA), 285–319 (RSQT…ETRV), and 332–364 (GYED…LTPP). Over residues 124–134 (ITDSRPSSAFS) the composition is skewed to polar residues.

Belongs to the herpesviridae VHS protein family. As to quaternary structure, interacts with human EIF4H, EIF4A1 and EIF4A2; interaction with eIF4AI and EIF4A2 presumably allows Vhs protein to associate with the eIF4F cap-binding complex.

Its subcellular location is the virion. Its function is as follows. Minor structural protein that acts as an endoribonuclease during lytic infection. Degrades host mRNAs in the cytoplasm by cutting them at preferred sites, including some in regions of translation initiation. Together with inhibition of host splicing by ICP27, contributes to an overall decrease in host protein synthesis. Also, after the onset of viral transcription, accelerates the turnover of viral mRNA, thereby facilitating the sequential expression of different classes of viral genes. Binds translation initiation factors eIF4H, eIF4AI, and eIF4AII, thereby may interact directly with the translation initiation complex and thus digest specifically mRNAs. Also impedes antigen presentation by major histocompatibility complex class I and class II molecules, inhibits secretion of cytokines that would otherwise recruit lymphocytes and neutrophils cells to the site of infection and blocks the activation of dendritic cells. Plays a role in the inhibition of interferon-beta activation by the cGAS/STING pathway. Mechanistically, down-regulates the expression of host cGAS/MB21D1. Also decreases the accumulation of other interferon-induced mRNAs such as host IFIT3 or CH25H to subvert their antiviral activity. The sequence is that of Virion host shutoff protein (UL41) from Human herpesvirus 1 (strain 17) (HHV-1).